The following is a 108-amino-acid chain: DNA-directed RNA polymerase subunit omega (108 aa).

Residues 1-32 (MTNSQSDAALAAVPDRFDPSAGGPGAYDTPLG) are disordered.

Belongs to the RNA polymerase subunit omega family. In terms of assembly, the RNAP catalytic core consists of 2 alpha, 1 beta, 1 beta' and 1 omega subunit. When a sigma factor is associated with the core the holoenzyme is formed, which can initiate transcription.

It catalyses the reaction RNA(n) + a ribonucleoside 5'-triphosphate = RNA(n+1) + diphosphate. Functionally, promotes RNA polymerase assembly. Latches the N- and C-terminal regions of the beta' subunit thereby facilitating its interaction with the beta and alpha subunits. In Mycobacterium avium (strain 104), this protein is DNA-directed RNA polymerase subunit omega.